The chain runs to 387 residues: Protein RecA (387 aa).

78 to 85 (GPESSGKT) provides a ligand contact to ATP. Residues 350 to 369 (QTREVKSIERDPKETKETKS) show a composition bias toward basic and acidic residues. Positions 350–387 (QTREVKSIERDPKETKETKSKQPVSFSTEAEVDIAVGE) are disordered.

Belongs to the RecA family.

It is found in the cytoplasm. In terms of biological role, can catalyze the hydrolysis of ATP in the presence of single-stranded DNA, the ATP-dependent uptake of single-stranded DNA by duplex DNA, and the ATP-dependent hybridization of homologous single-stranded DNAs. It interacts with LexA causing its activation and leading to its autocatalytic cleavage. The polypeptide is Protein RecA (Leptospira meyeri).